The primary structure comprises 465 residues: tRNA-2-methylthio-N(6)-dimethylallyladenosine synthase (465 aa).

An MTTase N-terminal domain is found at 26 to 141; it reads MRAHIITYGC…LPEALKANER (116 aa). C35, C71, C104, C173, C177, and C180 together coordinate [4Fe-4S] cluster. A Radical SAM core domain is found at 159-388; it reads PKGALSAHVT…IEKQKEWSYR (230 aa). Residues 391 to 453 form the TRAM domain; sequence LEWVGKTVEV…PHLLFGEVVG (63 aa).

It belongs to the methylthiotransferase family. MiaB subfamily. As to quaternary structure, monomer. [4Fe-4S] cluster serves as cofactor.

The protein resides in the cytoplasm. The enzyme catalyses N(6)-dimethylallyladenosine(37) in tRNA + (sulfur carrier)-SH + AH2 + 2 S-adenosyl-L-methionine = 2-methylsulfanyl-N(6)-dimethylallyladenosine(37) in tRNA + (sulfur carrier)-H + 5'-deoxyadenosine + L-methionine + A + S-adenosyl-L-homocysteine + 2 H(+). Its function is as follows. Catalyzes the methylthiolation of N6-(dimethylallyl)adenosine (i(6)A), leading to the formation of 2-methylthio-N6-(dimethylallyl)adenosine (ms(2)i(6)A) at position 37 in tRNAs that read codons beginning with uridine. This Thermus thermophilus (strain ATCC BAA-163 / DSM 7039 / HB27) protein is tRNA-2-methylthio-N(6)-dimethylallyladenosine synthase.